The primary structure comprises 226 residues: Isoprenyl transferase (226 aa).

Residue D12 is part of the active site. D12 contributes to the Mg(2+) binding site. Substrate is bound by residues 13–16, W17, K25, H29, and 57–59; these read GNAR and SSE. The active-site Proton acceptor is the N60. Substrate is bound by residues W61, R63, R174, and 180-182; that span reads RIS. E193 provides a ligand contact to Mg(2+).

The protein belongs to the UPP synthase family. As to quaternary structure, homodimer. Mg(2+) is required as a cofactor.

Functionally, catalyzes the condensation of isopentenyl diphosphate (IPP) with allylic pyrophosphates generating different type of terpenoids. The sequence is that of Isoprenyl transferase from Rickettsia typhi (strain ATCC VR-144 / Wilmington).